Reading from the N-terminus, the 200-residue chain is ATP-dependent Clp protease proteolytic subunit 1 (200 aa).

Catalysis depends on Ser-98, which acts as the Nucleophile. His-123 is a catalytic residue.

This sequence belongs to the peptidase S14 family. Fourteen ClpP subunits assemble into 2 heptameric rings which stack back to back to give a disk-like structure with a central cavity, resembling the structure of eukaryotic proteasomes.

It localises to the cytoplasm. The catalysed reaction is Hydrolysis of proteins to small peptides in the presence of ATP and magnesium. alpha-casein is the usual test substrate. In the absence of ATP, only oligopeptides shorter than five residues are hydrolyzed (such as succinyl-Leu-Tyr-|-NHMec, and Leu-Tyr-Leu-|-Tyr-Trp, in which cleavage of the -Tyr-|-Leu- and -Tyr-|-Trp bonds also occurs).. Cleaves peptides in various proteins in a process that requires ATP hydrolysis. Has a chymotrypsin-like activity. Plays a major role in the degradation of misfolded proteins. The protein is ATP-dependent Clp protease proteolytic subunit 1 of Mycobacterium leprae (strain TN).